A 361-amino-acid chain; its full sequence is Oxidoreductase lepF (361 aa).

A helical membrane pass occupies residues Met257 to Leu277.

It belongs to the NmrA-type oxidoreductase family.

The protein localises to the membrane. Functionally, oxidoreductase; part of the gene cluster 23 that mediates the biosynthesis of a family of 2-pyridones known as leporins. The hybrid PKS-NRPS synthetase lepA and the enoyl reductase lepG are responsible for fusion of phenylalanine with a hexaketide and subsequent release of the stable tetramic acid precursor, pre-leporin C. Because lepA lacks a designated enoylreductase (ER) domain, the required activity is provided the enoyl reductase lepG. It is possible that the dehydrogenase lepF also participates in production of pre-leporin C. Cytochrome P450 monooxygenase lepH is then required for the ring expansion step to yield leporin C. Leporin C is then presumably further oxidized by the N-hydroxylase lepD to form leporin B. LepI may possess a function in biosynthesis upstream of lepA. Leporin B is further oxidized in the presence of ferric ion to give the leporin B trimer-iron chelate, but whether or not this reaction is catalyzed by an enzyme in the pathway or by ferric ion is not determined yet. The sequence is that of Oxidoreductase lepF from Aspergillus flavus (strain ATCC 200026 / FGSC A1120 / IAM 13836 / NRRL 3357 / JCM 12722 / SRRC 167).